The chain runs to 483 residues: Ankyrin repeat domain-containing protein M-T5 (483 aa).

ANK repeat units lie at residues 32–63 (SRDTPFRLYLTRYDCTPEGLRLFLTRGADVNG), 67–101 (SRTSPLCTVLSNKDLGNEAEALAKQLIDAGADVNA), 105–137 (DGRYPLLCLLENDRINTARFVRYMIDRGTSVYV), 177–210 (YGFNVLQCYMIAHVRSSNVQILRFLLRHGVDSSR), 250–279 (LDFTPINYCVIHNDRRTFDYLLERGADPNV), and 283–312 (LGNSCLDLAVLNGNKYMVHRLLRKTITPDA). The segment at 390 to 478 (VSVFDTAFGL…LTDDEIHDLF (89 aa)) is PRANC/F-box-like.

Interacts (via PRANC/F-box-like domain) with the SKP1 component of the host SCF ubiquitin ligase complex. Interacts (via N-terminus) with host AKT1.

In terms of biological role, substrate-specific adapter of SKP1-containing E3 ubiquitin-protein ligases which mediate the ubiquitination and subsequent proteasomal degradation of host target proteins including CDKN1B. Disappearance of host CDKN1B correlates with cell cycle progression through the G0/G1 checkpoint. Therefore, viruses in infected cells are protected from diverse innate host antiviral responses normally triggered by G0/G1 cell cycle arrest. The polypeptide is Ankyrin repeat domain-containing protein M-T5 (m005R) (Myxoma virus (strain Lausanne) (MYXV)).